The sequence spans 119 residues: Membrane-anchored ubiquitin-fold protein 3 (119 aa).

One can recognise a Ubiquitin-like domain in the interval 8–76 (IEVKFRLFDG…NNRTLAESRV (69 aa)). Position 116 is a cysteine methyl ester (cysteine 116). Cysteine 116 carries S-geranylgeranyl cysteine lipidation. A propeptide spans 117–119 (TIL) (removed in mature form).

The protein resides in the cell membrane. Its function is as follows. May serve as docking site to facilitate the association of other proteins to the plasma membrane. The sequence is that of Membrane-anchored ubiquitin-fold protein 3 (MUB3) from Oryza sativa subsp. japonica (Rice).